The chain runs to 412 residues: Argininosuccinate synthase (412 aa).

Residues 24-32 and Ala-50 contribute to the ATP site; that span reads AFSGGLDTS. 2 residues coordinate L-citrulline: Tyr-103 and Ser-108. Residue Gly-132 coordinates ATP. Residues Thr-134, Asn-138, and Asp-139 each contribute to the L-aspartate site. Residue Asn-138 participates in L-citrulline binding. Arg-142 provides a ligand contact to L-citrulline.

The protein belongs to the argininosuccinate synthase family. Type 1 subfamily. Homotetramer.

Its subcellular location is the cytoplasm. It catalyses the reaction L-citrulline + L-aspartate + ATP = 2-(N(omega)-L-arginino)succinate + AMP + diphosphate + H(+). Its pathway is amino-acid biosynthesis; L-arginine biosynthesis; L-arginine from L-ornithine and carbamoyl phosphate: step 2/3. The sequence is that of Argininosuccinate synthase from Xanthomonas axonopodis pv. citri (strain 306).